The sequence spans 234 residues: MSSEVSARRDAKKLVRSPSGLRMVPEHRAFGSPFGLEEPQWVPDKECRRCMQCDAKFDFLTRKHHCRRCGKCFCDRCCSQKVPLRRMCFVDPVRQCAECALVSLKEAEFYDKQLKVLLSGATFLVTFGNSEKPETMTCRLSNNQRYLFLDGDSHYEIEIVHISTVQILTEGFPPGGGNARATGMFLQYTVPGTEGVTQLKLTVVEDVTVGRRQAVAWLVAMHKAAKLLYESRDQ.

Residues 44-104 form an FYVE-type zinc finger; the sequence is DKECRRCMQC…QCAECALVSL (61 aa). Residues Cys50, Cys53, Cys66, Cys69, Cys74, Cys77, Cys96, and Cys99 each coordinate Zn(2+). The tract at residues 107–234 is PH-like; sequence AEFYDKQLKV…AKLLYESRDQ (128 aa).

As to quaternary structure, interacts with PTK2/FAK1.

The protein resides in the cell junction. The protein localises to the focal adhesion. It is found in the cytoplasmic vesicle. Its subcellular location is the endosome. Functionally, plays a role in cell adhesion, and thereby in cell motility which requires repeated formation and disassembly of focal adhesions. Regulates microtubule-induced PTK2/FAK1 dephosphorylation, an event important for focal adhesion disassembly, as well as integrin beta-1/ITGB1 cell surface expression. The polypeptide is Zinc finger FYVE domain-containing protein 21 (ZFYVE21) (Homo sapiens (Human)).